Consider the following 514-residue polypeptide: ATP synthase subunit alpha (514 aa).

An ATP-binding site is contributed by 170-177; the sequence is GDRQIGKT.

The protein belongs to the ATPase alpha/beta chains family. As to quaternary structure, F-type ATPases have 2 components, CF(1) - the catalytic core - and CF(0) - the membrane proton channel. CF(1) has five subunits: alpha(3), beta(3), gamma(1), delta(1), epsilon(1). CF(0) has three main subunits: a(1), b(2) and c(9-12). The alpha and beta chains form an alternating ring which encloses part of the gamma chain. CF(1) is attached to CF(0) by a central stalk formed by the gamma and epsilon chains, while a peripheral stalk is formed by the delta and b chains.

Its subcellular location is the cell inner membrane. It catalyses the reaction ATP + H2O + 4 H(+)(in) = ADP + phosphate + 5 H(+)(out). In terms of biological role, produces ATP from ADP in the presence of a proton gradient across the membrane. The alpha chain is a regulatory subunit. In Pseudomonas aeruginosa (strain LESB58), this protein is ATP synthase subunit alpha.